Reading from the N-terminus, the 64-residue chain is Lectin-A (64 aa).

Chitin-binding type-1 domains are found at residues 1-20 (APEC…QVVT) and 22-45 (DFDD…NTDA).

In terms of processing, glycosylated.

Its function is as follows. N-acetyl-D-glucosamine binding lectin. Shows low hemagglutinating activity towards human erythrocytes. Has low mitogenic activity towards human peripheral blood lymphocytes. The chain is Lectin-A from Phytolacca americana (American pokeweed).